We begin with the raw amino-acid sequence, 472 residues long: MHVHPISTFRVFQEGHLLRNSIAIFALTTLFYFIGAELRLVHELSLFWPLNGVMAGVFARYVWLNRLHYYAISYVAMLVYDAITTEWGLVSLAINFSNMMFIVTVALLVVRDKRLGKNKYEPVSALRLFNYCLIAALLCAIVGAIGSVSIDSLDFWPLLADWFSEQFSTGVLIVPCMLTLAIPGVLPRFKAEQMMPAIALIVSVIASVVIGGAGSLAFPLPALIWCAVRYTPQVTCLLTFVTGAVEIVLVANSVIDISVGSPFSIPQMFSARLGIATMAICPIMVSFSVAAINSLMKQVALRADFDFLTQVYSRSGLYEALKSPSLKQTQHLTVMLLDIDYFKSINDNYGHECGDKVLSVFARHIQKIVGDKGLVARMGGEEFAVAVPSVNPVDGLLMAEKIRKGVELQPFTWQQKTLYLTVSIGVGSGRASYRTLTDDFNKLMVEADTCLYRSKKDGRNRTSTMRYGEEVV.

8 consecutive transmembrane segments (helical) span residues 21-41 (SIAI…LRLV), 44-64 (LSLF…YVWL), 90-110 (VSLA…LLVV), 128-148 (LFNY…IGSV), 167-187 (FSTG…GVLP), 198-218 (IALI…SLAF), 237-257 (LLTF…VIDI), and 273-293 (LGIA…AAIN). The 138-residue stretch at 330 to 467 (QHLTVMLLDI…GRNRTSTMRY (138 aa)) folds into the GGDEF domain. Residues Asp338 and Ile339 each coordinate Mg(2+). Positions 346, 351, and 355 each coordinate substrate. Position 381 (Glu381) interacts with Mg(2+).

Homodimer. Mg(2+) is required as a cofactor.

It is found in the cell membrane. The catalysed reaction is 2 GTP = 3',3'-c-di-GMP + 2 diphosphate. Its pathway is purine metabolism; 3',5'-cyclic di-GMP biosynthesis. Catalyzes the synthesis of cyclic-di-GMP (c-di-GMP) via the condensation of 2 GTP molecules. The chain is Probable diguanylate cyclase DgcF from Escherichia coli O157:H7.